Here is a 396-residue protein sequence, read N- to C-terminus: Zinc metalloproteinase nas-19 (396 aa).

The N-terminal stretch at 1–20 (MVRLIHLIGAIILLFSYAYC) is a signal peptide. Residues 38–231 (RVKRQFERLG…YKINQYYGCW (194 aa)) form the Peptidase M12A domain. Asn79 is a glycosylation site (N-linked (GlcNAc...) asparagine). Intrachain disulfides connect Cys82–Cys230, Cys105–Cys130, Cys232–Cys252, and Cys254–Cys263. A Zn(2+)-binding site is contributed by His138. Glu139 is a catalytic residue. His142 and His148 together coordinate Zn(2+). The EGF-like domain occupies 225–264 (NQYYGCWCSKQLECKNGGYTSPSDCSRCNCPKGFFGNLCD). N-linked (GlcNAc...) asparagine glycosylation occurs at Asn310.

Zn(2+) is required as a cofactor.

The protein resides in the secreted. In terms of biological role, metalloprotease. The chain is Zinc metalloproteinase nas-19 (nas-19) from Caenorhabditis elegans.